The chain runs to 308 residues: Protein FdhE homolog (308 aa).

Belongs to the FdhE family.

The protein resides in the cytoplasm. In terms of biological role, necessary for formate dehydrogenase activity. The protein is Protein FdhE homolog of Edwardsiella ictaluri (strain 93-146).